The primary structure comprises 86 residues: Synergistic-like venom protein (86 aa).

The first 21 residues, 1–21 (MKTLLLTLVVVTIVCLDLGYT), serve as a signal peptide directing secretion. Disulfide bonds link Cys24–Cys45, Cys38–Cys63, Cys67–Cys78, and Cys79–Cys84.

This sequence belongs to the three-finger toxin family. Short-chain subfamily. Aminergic toxin sub-subfamily. Expressed by the venom gland.

It is found in the secreted. In Dendroaspis angusticeps (Eastern green mamba), this protein is Synergistic-like venom protein.